The sequence spans 305 residues: Methionyl-tRNA formyltransferase (305 aa).

108–111 contacts (6S)-5,6,7,8-tetrahydrofolate; sequence SLLP.

It belongs to the Fmt family.

The enzyme catalyses L-methionyl-tRNA(fMet) + (6R)-10-formyltetrahydrofolate = N-formyl-L-methionyl-tRNA(fMet) + (6S)-5,6,7,8-tetrahydrofolate + H(+). Functionally, attaches a formyl group to the free amino group of methionyl-tRNA(fMet). The formyl group appears to play a dual role in the initiator identity of N-formylmethionyl-tRNA by promoting its recognition by IF2 and preventing the misappropriation of this tRNA by the elongation apparatus. In Clavibacter michiganensis subsp. michiganensis (strain NCPPB 382), this protein is Methionyl-tRNA formyltransferase.